The sequence spans 334 residues: Cell division protein ZipA (334 aa).

Over 1-2 the chain is Periplasmic; sequence ME. A helical membrane pass occupies residues 3-23; the sequence is LHIIFLILGGLLIVLLAGFSI. Topologically, residues 24–334 are cytoplasmic; it reads YSARREKSRI…DRQAYFARVS (311 aa).

The protein belongs to the ZipA family. As to quaternary structure, interacts with FtsZ via their C-terminal domains.

Its subcellular location is the cell inner membrane. In terms of biological role, essential cell division protein that stabilizes the FtsZ protofilaments by cross-linking them and that serves as a cytoplasmic membrane anchor for the Z ring. Also required for the recruitment to the septal ring of downstream cell division proteins. The sequence is that of Cell division protein ZipA from Haemophilus ducreyi (strain 35000HP / ATCC 700724).